We begin with the raw amino-acid sequence, 344 residues long: MTRLTLALDVMGGDFGPSVTVPAALQALNSNSQLTLLLVGNPDTITPLLAKADFEQRSRLQIIPAQSVIASDARPSHAIRNSRGTSMRIALELVKEGRAEACVSAGNTGALMGLAKLMLKPIQGIERPALVTVLPHQQKGKTVVLDLGANVDCDSTMLAQFAIMGSVLAEEVVGISNPRVALLNIGEEETKGLDSIREAAELLKSAPSINYIGYLEANELLTGKTDVLVCDGFTGNVTLKTMEGVVRMFLSLLKSQGEGKKTAWWLILLKRWLQKSLTRRFSHLNPDQYNGACLLGLRGTVIKSHGAANQRAFTVAIEQAVQAVQRQVPQRIAARLESVLAKSD.

The protein belongs to the PlsX family. In terms of assembly, homodimer. Probably interacts with PlsY.

The protein resides in the cytoplasm. The enzyme catalyses a fatty acyl-[ACP] + phosphate = an acyl phosphate + holo-[ACP]. Its pathway is lipid metabolism; phospholipid metabolism. Its function is as follows. Catalyzes the reversible formation of acyl-phosphate (acyl-PO(4)) from acyl-[acyl-carrier-protein] (acyl-ACP). This enzyme utilizes acyl-ACP as fatty acyl donor, but not acyl-CoA. In Enterobacter sp. (strain 638), this protein is Phosphate acyltransferase.